The following is a 419-amino-acid chain: Histidine--tRNA ligase (419 aa).

It belongs to the class-II aminoacyl-tRNA synthetase family. Homodimer.

It localises to the cytoplasm. It catalyses the reaction tRNA(His) + L-histidine + ATP = L-histidyl-tRNA(His) + AMP + diphosphate + H(+). The chain is Histidine--tRNA ligase from Thiobacillus denitrificans (strain ATCC 25259 / T1).